A 463-amino-acid chain; its full sequence is Casein kinase 1 (463 aa).

The Protein kinase domain maps to 9-278 (FKLGRKIGSG…LKRLFRDLFI (270 aa)). ATP contacts are provided by residues 15–23 (IGSGSFGEL) and lysine 38. Catalysis depends on aspartate 128, which acts as the Proton acceptor. A compositionally biased stretch (polar residues) spans 296–306 (ESNRLRSSGRT). The disordered stretch occupies residues 296–448 (ESNRLRSSGR…TARNVHDDPT (153 aa)). Residues 315–328 (ERTERAAARQDVPD) show a composition bias toward basic and acidic residues. Composition is skewed to polar residues over residues 376–396 (TSSSRNGSTSRKALLSSSRPS) and 404–440 (NRSNLIPTSSGSSRPSTMQRLHQSTGLETRSSLTKTA).

This sequence belongs to the protein kinase superfamily. CK1 Ser/Thr protein kinase family. Casein kinase I subfamily. In terms of assembly, monomer. Autophosphorylated. As to expression, expressed in leaves, stems, panicles and seeds. Expressed in root tissues and lamina joints.

The protein resides in the cytoplasm. It is found in the nucleus. The catalysed reaction is L-seryl-[protein] + ATP = O-phospho-L-seryl-[protein] + ADP + H(+). The enzyme catalyses L-threonyl-[protein] + ATP = O-phospho-L-threonyl-[protein] + ADP + H(+). Its activity is regulated as follows. Inhibited by N-(2-aminoethyl)-5-chloroisoquinoline-8-sulfonamide (CKI-7). In terms of biological role, casein kinases are operationally defined by their preferential utilization of acidic proteins such as caseins as substrates. Can phosphorylate casein in vitro. Required for normal root development through modulation of cell elongation. Plants silencing CKI1 show abnormal root development, with reduced number of lateral and adventitious roots, and shortened primary roots as a result of reduced cell elongation. May be involved in abscisic acid (ABA) and brassinosteroid (BR) signaling pathways. Plays an important role in the adaptive growth and fitness under low temperature (LT) conditions. May confer tolerance to LT through an auxin-dependent process. The polypeptide is Casein kinase 1 (CKI1) (Oryza sativa subsp. japonica (Rice)).